A 420-amino-acid chain; its full sequence is Shaggy-related protein kinase delta (420 aa).

Positions 1 to 61 (MESHLGNGVG…DIIDGVGAEP (61 aa)) are disordered. Residues 10 to 26 (GSSRSAKNTKNTSSSVD) are compositionally biased toward polar residues. The segment covering 28-41 (LSRDMLEMKIRDKT) has biased composition (basic and acidic residues). The span at 42–53 (EADEERDSEPDI) shows a compositional bias: acidic residues. Residues 82–366 (YIAEHVVGTG…AVEACIHPFF (285 aa)) enclose the Protein kinase domain. Residues 88 to 96 (VGTGSFGMV) and Lys-111 each bind ATP. Asp-207 acts as the Proton acceptor in catalysis. Tyr-242 carries the phosphotyrosine modification.

This sequence belongs to the protein kinase superfamily. CMGC Ser/Thr protein kinase family. GSK-3 subfamily. Autophosphorylated mainly on threonine and serine residues.

The enzyme catalyses L-seryl-[protein] + ATP = O-phospho-L-seryl-[protein] + ADP + H(+). It catalyses the reaction L-threonyl-[protein] + ATP = O-phospho-L-threonyl-[protein] + ADP + H(+). May mediate extracellular signals to regulate transcription in differentiating cells. This Arabidopsis thaliana (Mouse-ear cress) protein is Shaggy-related protein kinase delta (ASK4).